A 520-amino-acid chain; its full sequence is 2-methylcitrate dehydratase, mitochondrial (520 aa).

A mitochondrion-targeting transit peptide spans 1-37 (MRAFRSAANFGAASNIYRKSFTPASIASNRFVSARMS).

The protein belongs to the PrpD family. In terms of assembly, monomer.

The protein resides in the mitochondrion. It catalyses the reaction (2S,3S)-2-methylcitrate = 2-methyl-cis-aconitate + H2O. Its pathway is organic acid metabolism; propanoate degradation. With respect to regulation, several bivalent metal ions, such as nickel, copper, zinc, mercury, and lead, inhibit the activity to some extent. Inhibited by structural analogs such as citrate, cis-aconitate, isocitrate, 2-methylisocitrate, tricarballylate and fluorocitrate, but not by trans-aconitate or adipate. In terms of biological role, component of the methylcitrate cycle that catalyzes the dehydration of 2-methylcitrate to 2-methyl-cis-aconitate. The methylcitrate cycle is a metabolic pathway for the consumption of propionic acid. In Yarrowia lipolytica (strain CLIB 122 / E 150) (Yeast), this protein is 2-methylcitrate dehydratase, mitochondrial.